The primary structure comprises 193 residues: Xanthine phosphoribosyltransferase (193 aa).

Xanthine contacts are provided by L20 and N27. Residue 128–132 (ANGDA) participates in 5-phospho-alpha-D-ribose 1-diphosphate binding. K156 is a xanthine binding site.

It belongs to the purine/pyrimidine phosphoribosyltransferase family. Xpt subfamily. In terms of assembly, homodimer.

The protein resides in the cytoplasm. The enzyme catalyses XMP + diphosphate = xanthine + 5-phospho-alpha-D-ribose 1-diphosphate. Its pathway is purine metabolism; XMP biosynthesis via salvage pathway; XMP from xanthine: step 1/1. Converts the preformed base xanthine, a product of nucleic acid breakdown, to xanthosine 5'-monophosphate (XMP), so it can be reused for RNA or DNA synthesis. This is Xanthine phosphoribosyltransferase from Staphylococcus saprophyticus subsp. saprophyticus (strain ATCC 15305 / DSM 20229 / NCIMB 8711 / NCTC 7292 / S-41).